Here is a 223-residue protein sequence, read N- to C-terminus: Deoxyribose-phosphate aldolase (223 aa).

Asp-89 acts as the Proton donor/acceptor in catalysis. Catalysis depends on Lys-152, which acts as the Schiff-base intermediate with acetaldehyde. Catalysis depends on Lys-181, which acts as the Proton donor/acceptor.

Belongs to the DeoC/FbaB aldolase family. DeoC type 1 subfamily.

The protein localises to the cytoplasm. It catalyses the reaction 2-deoxy-D-ribose 5-phosphate = D-glyceraldehyde 3-phosphate + acetaldehyde. It participates in carbohydrate degradation; 2-deoxy-D-ribose 1-phosphate degradation; D-glyceraldehyde 3-phosphate and acetaldehyde from 2-deoxy-alpha-D-ribose 1-phosphate: step 2/2. Catalyzes a reversible aldol reaction between acetaldehyde and D-glyceraldehyde 3-phosphate to generate 2-deoxy-D-ribose 5-phosphate. The sequence is that of Deoxyribose-phosphate aldolase from Listeria welshimeri serovar 6b (strain ATCC 35897 / DSM 20650 / CCUG 15529 / CIP 8149 / NCTC 11857 / SLCC 5334 / V8).